The primary structure comprises 215 residues: UPF0319 protein VVA1446 (215 aa).

A signal peptide spans methionine 1 to alanine 21.

This sequence belongs to the UPF0319 family.

In Vibrio vulnificus (strain YJ016), this protein is UPF0319 protein VVA1446.